The sequence spans 98 residues: NADH-ubiquinone oxidoreductase chain 4L (98 aa).

Helical transmembrane passes span 1–21 (MSMV…GLLM), 29–49 (SLLC…LTIL), and 61–81 (IILL…LVMV).

This sequence belongs to the complex I subunit 4L family. Core subunit of respiratory chain NADH dehydrogenase (Complex I) which is composed of 45 different subunits.

It is found in the mitochondrion inner membrane. The catalysed reaction is a ubiquinone + NADH + 5 H(+)(in) = a ubiquinol + NAD(+) + 4 H(+)(out). Core subunit of the mitochondrial membrane respiratory chain NADH dehydrogenase (Complex I) which catalyzes electron transfer from NADH through the respiratory chain, using ubiquinone as an electron acceptor. Part of the enzyme membrane arm which is embedded in the lipid bilayer and involved in proton translocation. The chain is NADH-ubiquinone oxidoreductase chain 4L (MT-ND4L) from Bos indicus (Zebu).